We begin with the raw amino-acid sequence, 330 residues long: tRNA-modifying protein YgfZ (330 aa).

Residues tryptophan 28 and tryptophan 192 each contribute to the folate site.

This sequence belongs to the tRNA-modifying YgfZ family.

The protein resides in the cytoplasm. Its function is as follows. Folate-binding protein involved in regulating the level of ATP-DnaA and in the modification of some tRNAs. It is probably a key factor in regulatory networks that act via tRNA modification, such as initiation of chromosomal replication. The sequence is that of tRNA-modifying protein YgfZ from Blochmanniella pennsylvanica (strain BPEN).